Consider the following 412-residue polypeptide: Glucose-1-phosphate adenylyltransferase (412 aa).

Alpha-D-glucose 1-phosphate-binding positions include Tyr98, Gly163, 178 to 179 (EK), and Ser189.

This sequence belongs to the bacterial/plant glucose-1-phosphate adenylyltransferase family. In terms of assembly, homotetramer.

The catalysed reaction is alpha-D-glucose 1-phosphate + ATP + H(+) = ADP-alpha-D-glucose + diphosphate. It functions in the pathway glycan biosynthesis; glycogen biosynthesis. In terms of biological role, involved in the biosynthesis of ADP-glucose, a building block required for the elongation reactions to produce glycogen. Catalyzes the reaction between ATP and alpha-D-glucose 1-phosphate (G1P) to produce pyrophosphate and ADP-Glc. The chain is Glucose-1-phosphate adenylyltransferase from Thermosipho africanus (strain TCF52B).